We begin with the raw amino-acid sequence, 897 residues long: Protein transport protein SEC24-1 (897 aa).

Zn(2+) contacts are provided by Cys213, Cys216, Cys235, and Cys238. Positions 213 to 238 (CRRCRSYINPFAKFIEQGRRWRCNFC) are zinc finger-like.

Belongs to the SEC23/SEC24 family. SEC24 subfamily. As to quaternary structure, the COPII coat is composed of at least 5 proteins: the SEC23/24 complex, the SEC13/31 complex, and the protein SAR1. Golgi apparatus membrane; Peripheral membrane protein; Cytoplasmic side.

The protein localises to the cytoplasm. It is found in the cytoplasmic vesicle. The protein resides in the COPII-coated vesicle membrane. Its subcellular location is the endoplasmic reticulum membrane. It localises to the golgi apparatus membrane. Component of the coat protein complex II (COPII) which promotes the formation of transport vesicles from the endoplasmic reticulum (ER). The coat has two main functions, the physical deformation of the endoplasmic reticulum membrane into vesicles and the selection of cargo molecules. The sequence is that of Protein transport protein SEC24-1 (SEC241) from Candida glabrata (strain ATCC 2001 / BCRC 20586 / JCM 3761 / NBRC 0622 / NRRL Y-65 / CBS 138) (Yeast).